Here is a 77-residue protein sequence, read N- to C-terminus: Chaplin-H (77 aa).

Positions Met-1–Ala-25 are cleaved as a signal peptide. The region spanning Ser-36 to Asn-76 is the Chaplin domain. Forms amyloid fibrils in vitro stretches follow at residues Gly-38–Asn-54 and Gly-57–Asn-72. Cys-56 and Cys-74 form a disulfide bridge.

The protein belongs to the chaplin family. Short chaplin subfamily. In terms of assembly, homodimer; disulfide linked. About 10% of ChpH isolated from cell wall forms disulfide-bonded homodimers.

The protein localises to the cell surface. It localises to the secreted. It is found in the cell wall. Its subcellular location is the fimbrium. Its function is as follows. One of 8 partially redundant surface-active proteins required for efficient formation of aerial mycelium; the short chaplins assemble into a hydrophobic, amyloidal fibrillar surface layer that envelopes and protects aerial hyphae and spores, presumably anchored to the long chaplins. Chaplins have an overlapping function with the surface-active SapB peptide; chaplins are essential on minimal medium while on rich medium both chaplins and SapB are required for efficient aerial hyphae formation. Chaplins are also involved in cell attachment to a hydrophobic surface. Forms amyloid fibrils in vitro probably composed of stacked beta-sheets. A small chaplin extract (ChpD, ChpE, ChpF, ChpG and ChpH) self-assembles into 2 different amyloids; small fibrils at the air-water interface form an amphipathic membrane that resembles spore-surface structures involved in aerial hyphae formation, and hydrophilic fibrils in solution that resemble the fibers that attach cells to a hydrophobic surface. At the air-water interface the hydrophilic surface is in contact with water (probably equivalent to the peptidoglycan layer), while the hydrophobic face is exposed to the air, making the surface of the aerial hyphae hydrophobic. A minimal chaplin strain capable of forming aerial mycelium/hyphae on minimal medium contains ChpC, ChpE and ChpH. The strain also has restored rodlet formation on the hyphae surface. A small chaplin extract applied to a chaplin-deficient strain restores aerial hyphae formation. The small chaplin extract forms an amyloid-like structure similar to that seen on the surface of cells without rodlets (rdlA-rdlB deletions), and is highly surface active, reducing surface tension from 72 to 26 mJ/m(2), which probably allows escape of hyphae from an aqueous environment into air. In Streptomyces coelicolor (strain ATCC BAA-471 / A3(2) / M145), this protein is Chaplin-H.